We begin with the raw amino-acid sequence, 391 residues long: Mannose-6-phosphate isomerase (391 aa).

4 residues coordinate Zn(2+): Gln-97, His-99, Glu-134, and His-255. Arg-274 is a catalytic residue. An N6-acetyllysine modification is found at Lys-280.

The protein belongs to the mannose-6-phosphate isomerase type 1 family. Zn(2+) is required as a cofactor.

The protein resides in the cytoplasm. It catalyses the reaction D-mannose 6-phosphate = D-fructose 6-phosphate. Its function is as follows. Involved in the conversion of glucose to GDP-L-fucose, which can be converted to L-fucose, a capsular polysaccharide. In Escherichia coli (strain K12), this protein is Mannose-6-phosphate isomerase (manA).